The following is a 443-amino-acid chain: Trihelix transcription factor ASIL2 (443 aa).

Residues 1 to 82 (MEDDEDIRSQ…RPTGGGGRED (82 aa)) form a disordered region. Over residues 38-48 (YSLTPPGNSSQ) the composition is skewed to polar residues. The span at 64 to 78 (SGGGNNSSGRPTGGG) shows a compositional bias: gly residues. The Myb-like domain occupies 84-144 (WSEAATAVLI…QCKNRIDTVK (61 aa)). Disordered stretches follow at residues 238-350 (FGGS…GNKW) and 413-443 (RRMGNTSNDHHHSRKNNINAIVNNNNDLGNN). A compositionally biased stretch (gly residues) spans 239–249 (GGSGGGGGGGS). Residues 271–286 (TLPQQGRTLPQQQQQG) show a composition bias toward low complexity. The Bipartite nuclear localization signal motif lies at 290–303 (KRCSESKRWRFRKR). The span at 333–350 (MKTEEKKKQDGDGVGNKW) shows a compositional bias: basic and acidic residues. The stretch at 360 to 414 (FGEAYEQTENAKLQQVVEMEKERMKFLKELELQRMQFFVKTQLEISQLKQQHGRR) forms a coiled coil. Residues 428-443 (NNINAIVNNNNDLGNN) show a composition bias toward low complexity.

It is found in the nucleus. Functionally, transcription regulator that may repress the maturation program during early embryogenesis. This is Trihelix transcription factor ASIL2 from Arabidopsis thaliana (Mouse-ear cress).